Reading from the N-terminus, the 368-residue chain is UDP-N-acetylglucosamine--N-acetylmuramyl-(pentapeptide) pyrophosphoryl-undecaprenol N-acetylglucosamine transferase (368 aa).

Residues 16-18 (TGG), asparagine 130, arginine 171, serine 197, and glutamine 296 contribute to the UDP-N-acetyl-alpha-D-glucosamine site.

It belongs to the glycosyltransferase 28 family. MurG subfamily.

The protein resides in the cell inner membrane. It carries out the reaction di-trans,octa-cis-undecaprenyl diphospho-N-acetyl-alpha-D-muramoyl-L-alanyl-D-glutamyl-meso-2,6-diaminopimeloyl-D-alanyl-D-alanine + UDP-N-acetyl-alpha-D-glucosamine = di-trans,octa-cis-undecaprenyl diphospho-[N-acetyl-alpha-D-glucosaminyl-(1-&gt;4)]-N-acetyl-alpha-D-muramoyl-L-alanyl-D-glutamyl-meso-2,6-diaminopimeloyl-D-alanyl-D-alanine + UDP + H(+). Its pathway is cell wall biogenesis; peptidoglycan biosynthesis. Its function is as follows. Cell wall formation. Catalyzes the transfer of a GlcNAc subunit on undecaprenyl-pyrophosphoryl-MurNAc-pentapeptide (lipid intermediate I) to form undecaprenyl-pyrophosphoryl-MurNAc-(pentapeptide)GlcNAc (lipid intermediate II). This Acidiphilium cryptum (strain JF-5) protein is UDP-N-acetylglucosamine--N-acetylmuramyl-(pentapeptide) pyrophosphoryl-undecaprenol N-acetylglucosamine transferase.